The sequence spans 454 residues: Tol-Pal system protein TolB (454 aa).

An N-terminal signal peptide occupies residues 1 to 30 (MNDARSITRRRFMTLTGSGLAMLGGGHAFA).

The protein belongs to the TolB family. As to quaternary structure, the Tol-Pal system is composed of five core proteins: the inner membrane proteins TolA, TolQ and TolR, the periplasmic protein TolB and the outer membrane protein Pal. They form a network linking the inner and outer membranes and the peptidoglycan layer.

It is found in the periplasm. Part of the Tol-Pal system, which plays a role in outer membrane invagination during cell division and is important for maintaining outer membrane integrity. The protein is Tol-Pal system protein TolB of Bradyrhizobium diazoefficiens (strain JCM 10833 / BCRC 13528 / IAM 13628 / NBRC 14792 / USDA 110).